Here is a 142-residue protein sequence, read N- to C-terminus: ATP synthase F(0) complex subunit C3, mitochondrial (142 aa).

Residues Met-1–Arg-67 constitute a mitochondrion transit peptide. The chain crosses the membrane as a helical span at residues Val-83–Tyr-103. Residue Lys-110 is modified to N6,N6,N6-trimethyllysine. Residues Ile-118 to Ile-138 form a helical membrane-spanning segment.

It belongs to the ATPase C chain family. As to quaternary structure, F-type ATPases have 2 components, CF(1) - the catalytic core - and CF(0) - the membrane proton channel. CF(1) has five subunits: alpha(3), beta(3), gamma(1), delta(1), epsilon(1). CF(0) has three main subunits: a, b and c. Interacts with TMEM70 and TMEM242. In terms of processing, trimethylated by ATPSCKMT at Lys-110. Methylation is required for proper incorporation of the C subunit into the ATP synthase complex and mitochondrial respiration.

It is found in the mitochondrion membrane. Functionally, mitochondrial membrane ATP synthase (F(1)F(0) ATP synthase or Complex V) produces ATP from ADP in the presence of a proton gradient across the membrane which is generated by electron transport complexes of the respiratory chain. F-type ATPases consist of two structural domains, F(1) - containing the extramembraneous catalytic core and F(0) - containing the membrane proton channel, linked together by a central stalk and a peripheral stalk. During catalysis, ATP synthesis in the catalytic domain of F(1) is coupled via a rotary mechanism of the central stalk subunits to proton translocation. Part of the complex F(0) domain. A homomeric c-ring of probably 10 subunits is part of the complex rotary element. The sequence is that of ATP synthase F(0) complex subunit C3, mitochondrial from Pongo abelii (Sumatran orangutan).